The following is a 523-amino-acid chain: MEKRWLNSMLSKGELEYRCRLSKSINSLGPIESEGSIINNMNKNIPSHSDSYNSSYSTVDDLVGIRNFVSDDTFLVRDSNSSSYSIYLDIENQIFEIDNDPSFVSELESSFYSFRNSTYQNNISKNDDSHYDRYMYDTKYSWNNHINSCIDSYLRTQICIDSYILSGSHNYSDSYIYSYICGEGGNSSESESFSIRTSTHGNNLTITESSNDLDNDRTTNYSDFWVICENCHKFNYKRLFKSKMNICEECGYHLKMNSSDRIELLIDPGTWEPMDEDMVSVDPIEWDSEVDPIQWKSQVDPIEGDSEVDLIEGDSEEYKDSSYKDRISSSQIETGLPEAIQTGTGKLNGIPVAIGVMEFEFMGGSMGSVVGEKITRLIDYASNQFLPLILVCASGGARMQEGSLSLMQMAKISSALYDYKYQSNKKLFYVAILTSPTTGGVTASFAMLGDIIIAEPNAYIAFAGKRIIEETLKMEVPEGSQKTEPLFEKGLLDLIVPRNPLKDVVSELFQLHAFVPSNQNSIK.

Residues 224-523 form the CoA carboxyltransferase N-terminal domain; it reads FWVICENCHK…FVPSNQNSIK (300 aa). Zn(2+) contacts are provided by Cys-228, Cys-231, Cys-247, and Cys-250. The segment at 228-250 adopts a C4-type zinc-finger fold; that stretch reads CENCHKFNYKRLFKSKMNICEEC.

It belongs to the AccD/PCCB family. Acetyl-CoA carboxylase is a heterohexamer composed of biotin carboxyl carrier protein, biotin carboxylase and 2 subunits each of ACCase subunit alpha and ACCase plastid-coded subunit beta (accD). It depends on Zn(2+) as a cofactor.

It localises to the plastid. The protein resides in the chloroplast stroma. It carries out the reaction N(6)-carboxybiotinyl-L-lysyl-[protein] + acetyl-CoA = N(6)-biotinyl-L-lysyl-[protein] + malonyl-CoA. The protein operates within lipid metabolism; malonyl-CoA biosynthesis; malonyl-CoA from acetyl-CoA: step 1/1. Component of the acetyl coenzyme A carboxylase (ACC) complex. Biotin carboxylase (BC) catalyzes the carboxylation of biotin on its carrier protein (BCCP) and then the CO(2) group is transferred by the transcarboxylase to acetyl-CoA to form malonyl-CoA. The chain is Acetyl-coenzyme A carboxylase carboxyl transferase subunit beta, chloroplastic from Cucumis sativus (Cucumber).